The chain runs to 95 residues: Putative membrane protein insertion efficiency factor (95 aa).

The interval 72-95 is disordered; sequence FDPVPDAPTSPSPSSSCSCKGPHP. A compositionally biased stretch (low complexity) spans 83-95; it reads SPSSSCSCKGPHP.

Belongs to the UPF0161 family.

The protein resides in the cell inner membrane. Functionally, could be involved in insertion of integral membrane proteins into the membrane. In Xanthomonas axonopodis pv. citri (strain 306), this protein is Putative membrane protein insertion efficiency factor.